The sequence spans 320 residues: Lipoyl synthase (320 aa).

The [4Fe-4S] cluster site is built by Cys-67, Cys-72, Cys-78, Cys-93, Cys-97, Cys-100, and Ser-307. Residues 79–296 (FNHGTATFMI…RDKANEMGFE (218 aa)) enclose the Radical SAM core domain.

The protein belongs to the radical SAM superfamily. Lipoyl synthase family. [4Fe-4S] cluster is required as a cofactor.

The protein resides in the cytoplasm. It catalyses the reaction [[Fe-S] cluster scaffold protein carrying a second [4Fe-4S](2+) cluster] + N(6)-octanoyl-L-lysyl-[protein] + 2 oxidized [2Fe-2S]-[ferredoxin] + 2 S-adenosyl-L-methionine + 4 H(+) = [[Fe-S] cluster scaffold protein] + N(6)-[(R)-dihydrolipoyl]-L-lysyl-[protein] + 4 Fe(3+) + 2 hydrogen sulfide + 2 5'-deoxyadenosine + 2 L-methionine + 2 reduced [2Fe-2S]-[ferredoxin]. It functions in the pathway protein modification; protein lipoylation via endogenous pathway; protein N(6)-(lipoyl)lysine from octanoyl-[acyl-carrier-protein]: step 2/2. Its function is as follows. Catalyzes the radical-mediated insertion of two sulfur atoms into the C-6 and C-8 positions of the octanoyl moiety bound to the lipoyl domains of lipoate-dependent enzymes, thereby converting the octanoylated domains into lipoylated derivatives. This chain is Lipoyl synthase, found in Haemophilus influenzae (strain PittEE).